The chain runs to 73 residues: MNFLLSKLLLGLIRFYQYCISPLIPPRCRYTPTCSQYAVEAVKKYGAFKGGRLAIKRIARCHPLGGHGHDPVP.

Belongs to the UPF0161 family.

The protein resides in the cell inner membrane. Functionally, could be involved in insertion of integral membrane proteins into the membrane. This Neisseria meningitidis serogroup C / serotype 2a (strain ATCC 700532 / DSM 15464 / FAM18) protein is Putative membrane protein insertion efficiency factor.